The chain runs to 624 residues: Chaperone protein HtpG (624 aa).

Residues 1-336 (MKGQETRGFQ…SSDLPLNVSR (336 aa)) form an a; substrate-binding region. Positions 337 to 552 (EILQDSTVTR…ADEMSTQMAK (216 aa)) are b. Residues 553–624 (LFAAAGQKVP…IRRMNQLLVS (72 aa)) form a c region.

This sequence belongs to the heat shock protein 90 family. As to quaternary structure, homodimer.

The protein localises to the cytoplasm. Molecular chaperone. Has ATPase activity. This chain is Chaperone protein HtpG, found in Shigella boydii serotype 4 (strain Sb227).